The following is a 103-amino-acid chain: Small ribosomal subunit protein uS10 (103 aa).

Belongs to the universal ribosomal protein uS10 family. In terms of assembly, part of the 30S ribosomal subunit.

Involved in the binding of tRNA to the ribosomes. This is Small ribosomal subunit protein uS10 from Shewanella frigidimarina (strain NCIMB 400).